We begin with the raw amino-acid sequence, 242 residues long: Lactate utilization protein A 2 (242 aa).

Belongs to the LutA/YkgE family.

Is involved in L-lactate degradation and allows cells to grow with lactate as the sole carbon source. In Bacillus cereus (strain 03BB102), this protein is Lactate utilization protein A 2.